The primary structure comprises 296 residues: Protein FAM110A (296 aa).

Disordered stretches follow at residues 61–97 and 117–192; these read NTRQ…PCSG and PVSP…KSDL. 2 stretches are compositionally biased toward pro residues: residues 139-148 and 161-170; these read PATPPRPPPS and PASPARPYPS.

Belongs to the FAM110 family. May interact with CSPP1.

Its subcellular location is the cytoplasm. It localises to the cytoskeleton. The protein resides in the microtubule organizing center. It is found in the centrosome. The protein localises to the spindle pole. In Mus musculus (Mouse), this protein is Protein FAM110A (Fam110a).